The primary structure comprises 1095 residues: Solute carrier family 12 member 1 (1095 aa).

At 1-173 (MSVSIPSNSV…EEDMTGVVKF (173 aa)) the chain is on the cytoplasmic side. The short motif at 16–19 (RFQV) is the RFXV motif element. The tract at residues 29 to 49 (AAAVGDSADPPHYEETSFGDE) is disordered. Phosphoserine occurs at positions 57 and 87. Phosphothreonine occurs at positions 91, 96, 101, and 114. Ser-116 is modified (phosphoserine). Position 126 is a phosphoserine; by AMPK (Ser-126). The residue at position 144 (Ser-144) is a Phosphoserine. The chain crosses the membrane as a helical span at residues 174–194 (GWVKGVLVRCMLNIWGVMLFI). Residues 195–197 (RLS) lie on the Extracellular side of the membrane. Residues 198 to 218 (WIVGEAGIGLGVLIILLSTMV) traverse the membrane as a helical segment. The Cytoplasmic portion of the chain corresponds to 219–255 (TSITGLSTSAIATNGFVRGGGAYYLISRSLGPEFGGS). The helical transmembrane segment at 256–276 (IGLIFAFANAVAVAMYVVGFA) threads the bilayer. At 277 to 298 (ETVVDLLKESDSMMVDPTNDIR) the chain is on the extracellular side. The helical transmembrane segment at 299-319 (IIGSITVVILLGISVAGMEWE) threads the bilayer. Residues 320–323 (AKAQ) lie on the Cytoplasmic side of the membrane. A helical transmembrane segment spans residues 324–344 (VILLVILLIAIANFFIGTVIP). Over 345–375 (SNNEKKSRGFFNYQASIFAENFGPSFTKGEG) the chain is Extracellular. Residues 376 to 396 (FFSVFAIFFPAATGILAGANI) traverse the membrane as a helical segment. Residues 397-413 (SGDLEDPQDAIPRGTML) are Cytoplasmic-facing. A helical transmembrane segment spans residues 414–434 (AIFITTVAYIGVAICVAACVV). Residues 435-546 (RDATGSMNDT…NNEPLRGYFL (112 aa)) are Extracellular-facing. N-linked (GlcNAc...) asparagine glycosylation is found at Asn-442 and Asn-452. Transmembrane regions (helical) follow at residues 547–567 (TFVIAMAFILIAELNVIAPII) and 568–588 (SNFFLASYALINFSCFHASYA). Residues 589–605 (KSPGWRPAYGIYNMWVS) are Extracellular-facing. The helical transmembrane segment at 606-626 (LFGAILCCAVMFVINWWAAVI) threads the bilayer. Topologically, residues 627–1095 (TYVIELFLYI…NHKNVLTFYS (469 aa)) are cytoplasmic.

This sequence belongs to the SLC12A transporter family. As to quaternary structure, when phosphorylated, interacts with PPP3CB. Post-translationally, phosphorylated at Ser-87, Thr-96 and Thr-101 by OXSR1/OSR1 and STK39/SPAK downstream of WNK kinases (WNK1, WNK2, WNK3 or WNK4), promoting its activity. Short-term cyclosporine administration increases SLC12A1 phosphorylation in kidney thick ascending limb, possibly through the inhibition of PPP3CB/calcineurin A beta phosphatase. As to expression, predominantly expressed in kidney (at protein level). Kidney-specific; most highly expressed in the outer stripe of outer medulla (at protein level). In terms of tissue distribution, kidney-specific; most highly expressed in the cortical thick ascending limb (at protein level). As to expression, kidney-specific; most highly expressed in the inner stripe of outer medulla (at protein level).

It localises to the apical cell membrane. It catalyses the reaction K(+)(out) + 2 chloride(out) + Na(+)(out) = K(+)(in) + 2 chloride(in) + Na(+)(in). With respect to regulation, activated following phosphorylation by OXSR1/OSR1 and STK39/SPAK downstream of WNK kinases (WNK1, WNK2, WNK3 or WNK4). Its activity is regulated as follows. Inhibited by mercury dichloride and diuretic drug bumetaide. Inactive in isotonic conditions. Its function is as follows. Renal sodium, potassium and chloride ion cotransporter that mediates the transepithelial NaCl reabsorption in the thick ascending limb and plays an essential role in the urinary concentration and volume regulation. Electrically silent transporter system. Functionally, high affinity, high capacity cotransporter for sodium, potassium and chloride ions, with a coupling ratio 1Na(+):1K(+):2Cl(-). High affinity, low capacity cotransporter for sodium, potassium and chloride ions, with a coupling ratio 1Na(+):1K(+):2Cl(-). In terms of biological role, low affinity, low capacity cotransporter for sodium, potassium and chloride ions, with a coupling ratio 1Na(+):1K(+):2Cl(-). The protein is Solute carrier family 12 member 1 (Slc12a1) of Mus musculus (Mouse).